The chain runs to 431 residues: Extensin-3 (431 aa).

The first 27 residues, 1-27 (MGSPMASLVATLLVLTISLTFVSQSTA), serve as a signal peptide directing secretion. Repeat copies occupy residues 33-41 (SPPPPVKHY), 49-55 (SPPPVYH), and 56-63 (SPPPPKKH). Residues 33 to 384 (SPPPPVKHYT…KSPPPPVKHY (352 aa)) form a 13 X 9 AA repeats of S-P-P-P-P-V-K-H-Y region. The interval 42–408 (TPPVKHYSPP…KYVYKSPPPP (367 aa)) is disordered. Residues 49 to 59 (SPPPVYHSPPP) show a composition bias toward pro residues. The 13 X 7 AA repeats of S-P-P-P-V-Y-H stretch occupies residues 49–391 (SPPPVYHSPP…KHYSPPPVYH (343 aa)). The interval 56–371 (SPPPPKKHYE…YHSPPPPKKH (316 aa)) is 12 X 8 AA repeats of S-P-P-P-P-K-K-H. Residues 64–67 (YEYK) are isodityrosine cross-linking. 3 consecutive repeat copies span residues 68–76 (SPPPPVKHY), 77–83 (SPPPVYH), and 84–91 (SPPPPKKH). Pro residues predominate over residues 68-87 (SPPPPVKHYSPPPVYHSPPP). Positions 92–95 (YVYK) are isodityrosine cross-linking. 3 repeat units span residues 96-104 (SPPPPVKHY), 105-111 (SPPPVYH), and 112-119 (SPPPPKKH). The span at 96-115 (SPPPPVKHYSPPPVYHSPPP) shows a compositional bias: pro residues. Residues 120-123 (YVYK) form an isodityrosine cross-linking region. Tandem repeats lie at residues 124–132 (SPPPPVKHY), 133–139 (SPPPVYH), and 140–147 (SPPPPKKH). Pro residues predominate over residues 124–143 (SPPPPVKHYSPPPVYHSPPP). The isodityrosine cross-linking stretch occupies residues 148–151 (YVYK). 3 consecutive repeat copies span residues 152–160 (SPPPPVKHY), 161–167 (SPPPVYH), and 168–175 (SPPPPKKH). Residues 152-171 (SPPPPVKHYSPPPVYHSPPP) are compositionally biased toward pro residues. The interval 176–179 (YVYK) is isodityrosine cross-linking. Repeat copies occupy residues 180–188 (SPPPPVKHY), 189–195 (SPPPVYH), and 196–203 (SPPPPKKH). Over residues 180 to 199 (SPPPPVKHYSPPPVYHSPPP) the composition is skewed to pro residues. Positions 204–207 (YVYK) are isodityrosine cross-linking. Repeat copies occupy residues 208-216 (SPPPPVKHY), 217-223 (SPPPVYH), and 224-231 (SPPPPKKH). The span at 208 to 227 (SPPPPVKHYSPPPVYHSPPP) shows a compositional bias: pro residues. The segment at 232–235 (YVYK) is isodityrosine cross-linking. 3 repeat units span residues 236–244 (SPPPPVKHY), 245–251 (SPPPVYH), and 252–259 (SPPPPKKH). The span at 236–255 (SPPPPVKHYSPPPVYHSPPP) shows a compositional bias: pro residues. The tract at residues 260 to 263 (YVYK) is isodityrosine cross-linking. 3 consecutive repeat copies span residues 264-272 (SPPPPVKHY), 273-279 (SPPPVYH), and 280-287 (SPPPPKKH). Residues 264–283 (SPPPPVKHYSPPPVYHSPPP) are compositionally biased toward pro residues. The segment at 288–291 (YVYK) is isodityrosine cross-linking. Tandem repeats lie at residues 292-300 (SPPPPVKHY), 301-307 (SPPPVYH), and 308-315 (SPPPPKKH). A compositionally biased stretch (pro residues) spans 292 to 311 (SPPPPVKHYSPPPVYHSPPP). Residues 316–319 (YVYK) form an isodityrosine cross-linking region. Tandem repeats lie at residues 320 to 328 (SPPPPVKHY), 329 to 335 (SPPPVYH), and 336 to 343 (SPPPPKKH). Residues 320 to 339 (SPPPPVKHYSPPPVYHSPPP) show a composition bias toward pro residues. Positions 344-347 (YVYK) are isodityrosine cross-linking. A run of 3 repeats spans residues 348 to 356 (SPPPPVKHY), 357 to 363 (SPPPVYH), and 364 to 371 (SPPPPKKH). Over residues 348 to 367 (SPPPPVKHYSPPPVYHSPPP) the composition is skewed to pro residues. Residues 372–375 (YVYK) form an isodityrosine cross-linking region. Tandem repeats lie at residues 376 to 384 (SPPPPVKHY) and 385 to 391 (SPPPVYH). The segment covering 376–395 (SPPPPVKHYSPPPVYHSPPP) has biased composition (pro residues). Isodityrosine cross-linking stretches follow at residues 400–403 (YVYK) and 420–423 (YLYK).

It belongs to the extensin family. Post-translationally, the proline residues of the Ser-Pro(3) repeats are hydroxylated and then O-glycosylated (arabinosylation) by HPAT1, HPAT2 and HPAT3. Around 20% of Hyp units are in the nonglycosylated form. The Ser residues are O-galactosylated. The lack of Ser-O-galactosylation does not affect Hyp-O-arabinosylation, but both types of O-glycosylation are central for the functionality of the protein. Correct Hyp-O-arabinosylation appears to be responsible for generating a bend on the EXT3 backbone around a YVY motif, which may represent a better scenario for Tyr intramolecular cross-links (isodityrosine type). Synthetised as soluble proteins which become insolubilised in the cell wall through the intermolecular cross-linking of Tyr on adjacent monomers. Isodityrosine (IDT) stabilizes and makes rigid the part of the polypeptide where IDT functional sites are present. As to expression, predominantly expressed in the roots.

The protein localises to the secreted. The protein resides in the primary cell wall. Structural component which strengthens the primary cell wall. Forms dendritic structures indicating a propensity for self-assembly through tyrosine cross-linking. Forms intermolecular cross-links exclusively by pulcherosine (three Tyr). Scaffold formation requires an unobstructed C-terminus of EXT3. Required for the correct positioning of the cell plate during cytokinesis in cells of the developing embryo. Extensins contain a characteristic repeat of the pentapeptide Ser-Pro(4). For this particular extensin, a typical repeat of Ser-Pro(3) is found. This Arabidopsis thaliana (Mouse-ear cress) protein is Extensin-3.